We begin with the raw amino-acid sequence, 475 residues long: Coronin-2B (475 aa).

WD repeat units follow at residues 80–120 (GHQG…LKRN), 130–172 (GHSR…KMID), 174–212 (HTDV…VLQE), 215–258 (CKNH…MPVT), and 260–303 (EEID…PYLT). Positions 431-470 (NELLRMFFKQQEEIRRLKEQLSQRDLLVRQLELELKNLRN) form a coiled coil.

Belongs to the WD repeat coronin family.

Its subcellular location is the cytoplasm. The protein resides in the cytoskeleton. In terms of biological role, may play a role in the reorganization of neuronal actin structure. The chain is Coronin-2B (coro2b) from Xenopus laevis (African clawed frog).